The sequence spans 501 residues: Amidophosphoribosyltransferase (501 aa).

Cys-2 serves as the catalytic Nucleophile. The Glutamine amidotransferase type-2 domain occupies 2 to 234 (CGIVGIVGKS…PGEAVYITEE (233 aa)). Residues Thr-303, Asp-365, and Asp-366 each contribute to the Mg(2+) site.

The protein in the C-terminal section; belongs to the purine/pyrimidine phosphoribosyltransferase family. Mg(2+) serves as cofactor.

It catalyses the reaction 5-phospho-beta-D-ribosylamine + L-glutamate + diphosphate = 5-phospho-alpha-D-ribose 1-diphosphate + L-glutamine + H2O. It participates in purine metabolism; IMP biosynthesis via de novo pathway; N(1)-(5-phospho-D-ribosyl)glycinamide from 5-phospho-alpha-D-ribose 1-diphosphate: step 1/2. Its function is as follows. Catalyzes the formation of phosphoribosylamine from phosphoribosylpyrophosphate (PRPP) and glutamine. The polypeptide is Amidophosphoribosyltransferase (Pseudomonas aeruginosa (strain ATCC 15692 / DSM 22644 / CIP 104116 / JCM 14847 / LMG 12228 / 1C / PRS 101 / PAO1)).